Here is a 270-residue protein sequence, read N- to C-terminus: Formamidopyrimidine-DNA glycosylase (270 aa).

P2 functions as the Schiff-base intermediate with DNA in the catalytic mechanism. E3 serves as the catalytic Proton donor. Catalysis depends on K58, which acts as the Proton donor; for beta-elimination activity. DNA is bound by residues H91, R110, and R151. Residues 236–270 (FVYGRGGEFCKSCGSTLREIRLGQRASVYCSRCQR) form an FPG-type zinc finger. R260 serves as the catalytic Proton donor; for delta-elimination activity.

Belongs to the FPG family. In terms of assembly, monomer. Zn(2+) is required as a cofactor.

It catalyses the reaction Hydrolysis of DNA containing ring-opened 7-methylguanine residues, releasing 2,6-diamino-4-hydroxy-5-(N-methyl)formamidopyrimidine.. It carries out the reaction 2'-deoxyribonucleotide-(2'-deoxyribose 5'-phosphate)-2'-deoxyribonucleotide-DNA = a 3'-end 2'-deoxyribonucleotide-(2,3-dehydro-2,3-deoxyribose 5'-phosphate)-DNA + a 5'-end 5'-phospho-2'-deoxyribonucleoside-DNA + H(+). In terms of biological role, involved in base excision repair of DNA damaged by oxidation or by mutagenic agents. Acts as a DNA glycosylase that recognizes and removes damaged bases. Has a preference for oxidized purines, such as 7,8-dihydro-8-oxoguanine (8-oxoG). Has AP (apurinic/apyrimidinic) lyase activity and introduces nicks in the DNA strand. Cleaves the DNA backbone by beta-delta elimination to generate a single-strand break at the site of the removed base with both 3'- and 5'-phosphates. This Stutzerimonas stutzeri (strain A1501) (Pseudomonas stutzeri) protein is Formamidopyrimidine-DNA glycosylase.